A 383-amino-acid chain; its full sequence is Mannan endo-1,4-beta-mannosidase A (383 aa).

Positions 1–18 (MKFSQALLSLASLALAAA) are cleaved as a signal peptide. Asparagine 75 carries N-linked (GlcNAc...) asparagine glycosylation. Residue tryptophan 97 participates in substrate binding. An N-linked (GlcNAc...) asparagine glycan is attached at asparagine 199. Substrate contacts are provided by residues asparagine 210 and 211-213 (EPR). Residue glutamate 211 is the Proton donor/acceptor of the active site. Cysteine 214 and cysteine 217 form a disulfide bridge. Substrate contacts are provided by tyrosine 279 and tryptophan 283. Cysteine 301 and cysteine 308 are oxidised to a cystine. The active-site Nucleophile is glutamate 312. A disulfide bridge links cysteine 320 with cysteine 369. Asparagine 332 is a glycosylation site (N-linked (GlcNAc...) asparagine). Position 342 (tryptophan 342) interacts with substrate.

Belongs to the glycosyl hydrolase 5 (cellulase A) family. In terms of assembly, monomer.

It is found in the secreted. The catalysed reaction is Random hydrolysis of (1-&gt;4)-beta-D-mannosidic linkages in mannans, galactomannans and glucomannans.. Its function is as follows. Endo-1,4-mannanase that catalyzes the random hydrolysis of (1-&gt;4)-beta-D-mannosidic linkages in mannans and heteromannans. It is a crucial enzyme for depolymerization of seed galactomannans and wood galactoglucomannans. Active against locust bean gum and gum guar. Also has transglycosylation activity. This Emericella nidulans (strain FGSC A4 / ATCC 38163 / CBS 112.46 / NRRL 194 / M139) (Aspergillus nidulans) protein is Mannan endo-1,4-beta-mannosidase A (manA).